We begin with the raw amino-acid sequence, 155 residues long: Ribosomal RNA large subunit methyltransferase H (155 aa).

S-adenosyl-L-methionine contacts are provided by residues Leu-72, Gly-103, and 122–127 (LSPLTL).

The protein belongs to the RNA methyltransferase RlmH family. As to quaternary structure, homodimer.

The protein localises to the cytoplasm. The enzyme catalyses pseudouridine(1915) in 23S rRNA + S-adenosyl-L-methionine = N(3)-methylpseudouridine(1915) in 23S rRNA + S-adenosyl-L-homocysteine + H(+). In terms of biological role, specifically methylates the pseudouridine at position 1915 (m3Psi1915) in 23S rRNA. The sequence is that of Ribosomal RNA large subunit methyltransferase H from Haemophilus ducreyi (strain 35000HP / ATCC 700724).